Consider the following 106-residue polypeptide: ATP-dependent Clp protease adapter protein ClpS (106 aa).

The protein belongs to the ClpS family. In terms of assembly, binds to the N-terminal domain of the chaperone ClpA.

Involved in the modulation of the specificity of the ClpAP-mediated ATP-dependent protein degradation. This Photobacterium profundum (strain SS9) protein is ATP-dependent Clp protease adapter protein ClpS.